The sequence spans 258 residues: 5'-nucleotidase SurE (258 aa).

A divalent metal cation-binding residues include aspartate 14, aspartate 15, serine 45, and asparagine 101.

This sequence belongs to the SurE nucleotidase family. A divalent metal cation serves as cofactor.

It localises to the cytoplasm. It carries out the reaction a ribonucleoside 5'-phosphate + H2O = a ribonucleoside + phosphate. In terms of biological role, nucleotidase that shows phosphatase activity on nucleoside 5'-monophosphates. In Chlorobium limicola (strain DSM 245 / NBRC 103803 / 6330), this protein is 5'-nucleotidase SurE.